We begin with the raw amino-acid sequence, 94 residues long: Aspartyl/glutamyl-tRNA(Asn/Gln) amidotransferase subunit C (94 aa).

The protein belongs to the GatC family. In terms of assembly, heterotrimer of A, B and C subunits.

The enzyme catalyses L-glutamyl-tRNA(Gln) + L-glutamine + ATP + H2O = L-glutaminyl-tRNA(Gln) + L-glutamate + ADP + phosphate + H(+). The catalysed reaction is L-aspartyl-tRNA(Asn) + L-glutamine + ATP + H2O = L-asparaginyl-tRNA(Asn) + L-glutamate + ADP + phosphate + 2 H(+). Functionally, allows the formation of correctly charged Asn-tRNA(Asn) or Gln-tRNA(Gln) through the transamidation of misacylated Asp-tRNA(Asn) or Glu-tRNA(Gln) in organisms which lack either or both of asparaginyl-tRNA or glutaminyl-tRNA synthetases. The reaction takes place in the presence of glutamine and ATP through an activated phospho-Asp-tRNA(Asn) or phospho-Glu-tRNA(Gln). This Syntrophomonas wolfei subsp. wolfei (strain DSM 2245B / Goettingen) protein is Aspartyl/glutamyl-tRNA(Asn/Gln) amidotransferase subunit C.